The following is a 398-amino-acid chain: MATRLFTSESVTEGHPDKIADQVSDSILDAMLKDDPKSRVAVETMITTGQVHVAGEVTTKTYVDIASVVRERILEIGYDSSKKGFDGASCGVSVSIGSQSPDIAQGVDTAHEARVEGSTEDDLDRQGAGDQGLMFGFACDETPELMPLPIALAHRLARRLSAVRKDGQVGYLRPDGKTQVTIEYEDGKPVRLDTVVVSSQHAADIDLDTLLAPDVAEYVVEPELALLEISTEGRRLLVNPTGRFEIGGPMGDAGLTGRKIIVDTYGGYARHGGGAFSGKDPSKVDRSAAYAMRWVAKNVVAAGLASRCEVQVAYAIGKAHPVGLFVETFGTGKVPDAQIQDAVTQVFDLRPAAIVRDLDLLRPIYAQTAAYGHFGRPELDFTWEATSRADALTAAVKG.

Residue H15 participates in ATP binding. D17 contributes to the Mg(2+) binding site. E43 provides a ligand contact to K(+). Residues E56 and Q99 each coordinate L-methionine. Residues 99–109 (QSPDIAQGVDT) are flexible loop. ATP-binding positions include 175–177 (DGK), 243–244 (RF), D252, 258–259 (RK), A275, and K279. D252 is an L-methionine binding site. Residue K283 participates in L-methionine binding.

The protein belongs to the AdoMet synthase family. As to quaternary structure, homotetramer; dimer of dimers. Requires Mg(2+) as cofactor. The cofactor is K(+).

The protein localises to the cytoplasm. It catalyses the reaction L-methionine + ATP + H2O = S-adenosyl-L-methionine + phosphate + diphosphate. It participates in amino-acid biosynthesis; S-adenosyl-L-methionine biosynthesis; S-adenosyl-L-methionine from L-methionine: step 1/1. Catalyzes the formation of S-adenosylmethionine (AdoMet) from methionine and ATP. The overall synthetic reaction is composed of two sequential steps, AdoMet formation and the subsequent tripolyphosphate hydrolysis which occurs prior to release of AdoMet from the enzyme. This chain is S-adenosylmethionine synthase, found in Parafrankia sp. (strain EAN1pec).